The following is a 68-amino-acid chain: Large ribosomal subunit protein uL30 (68 aa).

The protein belongs to the universal ribosomal protein uL30 family. Part of the 50S ribosomal subunit.

This is Large ribosomal subunit protein uL30 from Bartonella tribocorum (strain CIP 105476 / IBS 506).